The chain runs to 492 residues: Ketol-acid reductoisomerase (NADP(+)) (492 aa).

The KARI N-terminal Rossmann domain occupies 14–208 (LDQLGKCRFM…GGHRAGVLQS (195 aa)). Residues 45–48 (CGAQ), R68, R76, S78, and 108–110 (DKQ) contribute to the NADP(+) site. Residue H132 is part of the active site. G158 is an NADP(+) binding site. KARI C-terminal knotted domains are found at residues 209–344 (SFVA…NAPQ) and 345–485 (FDGK…MKDM). The Mg(2+) site is built by D217, E221, E389, and E393. S414 serves as a coordination point for substrate.

Belongs to the ketol-acid reductoisomerase family. It depends on Mg(2+) as a cofactor.

It catalyses the reaction (2R)-2,3-dihydroxy-3-methylbutanoate + NADP(+) = (2S)-2-acetolactate + NADPH + H(+). It carries out the reaction (2R,3R)-2,3-dihydroxy-3-methylpentanoate + NADP(+) = (S)-2-ethyl-2-hydroxy-3-oxobutanoate + NADPH + H(+). It participates in amino-acid biosynthesis; L-isoleucine biosynthesis; L-isoleucine from 2-oxobutanoate: step 2/4. It functions in the pathway amino-acid biosynthesis; L-valine biosynthesis; L-valine from pyruvate: step 2/4. In terms of biological role, involved in the biosynthesis of branched-chain amino acids (BCAA). Catalyzes an alkyl-migration followed by a ketol-acid reduction of (S)-2-acetolactate (S2AL) to yield (R)-2,3-dihydroxy-isovalerate. In the isomerase reaction, S2AL is rearranged via a Mg-dependent methyl migration to produce 3-hydroxy-3-methyl-2-ketobutyrate (HMKB). In the reductase reaction, this 2-ketoacid undergoes a metal-dependent reduction by NADPH to yield (R)-2,3-dihydroxy-isovalerate. This is Ketol-acid reductoisomerase (NADP(+)) from Pectobacterium atrosepticum (strain SCRI 1043 / ATCC BAA-672) (Erwinia carotovora subsp. atroseptica).